Consider the following 241-residue polypeptide: MIRLLNNFNFSEIDNADPAQWCRLFQEAAAEFDVLLSDAQLNRFLMYYRELKFWNSRINLIASAESVTDIVIKHFLDSLTLIPCIPFPDGRLIDIGTGGGFPGIPLKIALNSLKVTLLEASRKKVSFLKSLRRVLNLQDMKILNERVEDLITQAPCPNRFDMVVSRAALKLPEYLRFGKELVSSHGVIIAMKGANYQHELEDVNDILEEYGIFLAEVRSLALPCTGDFRAILIFRKSLSRT.

Residues Gly-96, Phe-101, 119-121, 147-148, and Arg-166 contribute to the S-adenosyl-L-methionine site; these read EAS and VE.

It belongs to the methyltransferase superfamily. RNA methyltransferase RsmG family.

The protein resides in the cytoplasm. The enzyme catalyses guanosine(527) in 16S rRNA + S-adenosyl-L-methionine = N(7)-methylguanosine(527) in 16S rRNA + S-adenosyl-L-homocysteine. Specifically methylates the N7 position of guanine in position 527 of 16S rRNA. The protein is Ribosomal RNA small subunit methyltransferase G of Syntrophus aciditrophicus (strain SB).